The following is a 427-amino-acid chain: Gamma-glutamyl phosphate reductase (427 aa).

It belongs to the gamma-glutamyl phosphate reductase family.

The protein resides in the cytoplasm. It catalyses the reaction L-glutamate 5-semialdehyde + phosphate + NADP(+) = L-glutamyl 5-phosphate + NADPH + H(+). It participates in amino-acid biosynthesis; L-proline biosynthesis; L-glutamate 5-semialdehyde from L-glutamate: step 2/2. In terms of biological role, catalyzes the NADPH-dependent reduction of L-glutamate 5-phosphate into L-glutamate 5-semialdehyde and phosphate. The product spontaneously undergoes cyclization to form 1-pyrroline-5-carboxylate. This Rhizobium johnstonii (strain DSM 114642 / LMG 32736 / 3841) (Rhizobium leguminosarum bv. viciae) protein is Gamma-glutamyl phosphate reductase.